Reading from the N-terminus, the 40-residue chain is Natriuretic peptide PaNP-b (40 aa).

A disulfide bridge connects residues C9 and C25. Positions 36 to 40 (IPGGS) are excised as a propeptide.

Belongs to the natriuretic peptide family. In terms of tissue distribution, expressed by the venom gland.

It is found in the secreted. Snake venom natriuretic peptide that targets both NPR1 and NPR2. Exhibits hypotensive and vasodepressor activities. This Pseudechis australis (Mulga snake) protein is Natriuretic peptide PaNP-b.